A 117-amino-acid polypeptide reads, in one-letter code: Hydrogenase maturation factor HypA (117 aa).

Histidine 2 provides a ligand contact to Ni(2+). Zn(2+)-binding residues include cysteine 73, cysteine 76, cysteine 89, and cysteine 92.

Belongs to the HypA/HybF family.

Its function is as follows. Involved in the maturation of [NiFe] hydrogenases. Required for nickel insertion into the metal center of the hydrogenase. This is Hydrogenase maturation factor HypA from Chlorobium luteolum (strain DSM 273 / BCRC 81028 / 2530) (Pelodictyon luteolum).